The primary structure comprises 195 residues: Calcineurin B homologous protein 1 (195 aa).

A lipid anchor (N-myristoyl glycine) is attached at glycine 2. Residues 2–6 carry the Necessary for association with microtubule and interaction with GAPDH motif; it reads GSRAS. 4 EF-hand domains span residues 26 to 61, 66 to 101, 110 to 145, and 151 to 186; these read SQITRLYSRFTSLDKGENGTLSREDFQRIPELAINP, IINAFFPEGEDQVNFRGFMRTLAHFRPIEDNEKSKD, SRSNKLHFAFRLYDLDKDEKISRDELLQVLRMMVGV, and QLGSIADRTIQEADQDGDSAISFTEFVKVLEKVDVE. Ca(2+)-binding residues include aspartate 123, aspartate 125, aspartate 127, lysine 129, and glutamate 134. A Nuclear export signal 1 motif is present at residues 138–147; sequence VLRMMVGVNI. A necessary for nuclear export signal region spans residues 143-185; the sequence is VGVNISDEQLGSIADRTIQEADQDGDSAISFTEFVKVLEKVDV. Ca(2+)-binding residues include aspartate 164, aspartate 166, aspartate 168, and glutamate 175. A Nuclear export signal 2 motif is present at residues 176 to 185; the sequence is FVKVLEKVDV.

The protein belongs to the calcineurin regulatory subunit family. CHP subfamily. In terms of assembly, monomer. Interacts with STK17B; the interaction occurs in a calcium-independent manner and induces the translocation of CHP1 from the Golgi to the nucleus. Interacts with GAPDH; the interaction is direct, occurs in a N-myristoylation-dependent manner and facilitates the ability of CHP1 to bind microtubules. Interacts with KIF1B (via the C-terminal end of the kinesin-motor domain); the interaction occurs in a calcium-dependent manner. Associates (via C-terminal domain) with microtubules; the association occurs with polymerized microtubules during the cell cycle in a myristoylation- and calcium-independent manner and is enhanced by GAPDH. Interacts with PPP3CA. Interacts with SLC9A1/NHE1 (via the C-terminal domain); the interaction occurs at the plasma membrane in a calcium-dependent manner and at a domain that is critical for growth factor stimulation of the exchanger. Interacts with SLC9A3; increases SLC9A3 trafficking and activity at the plasma membrane. Phosphorylated; decreased phosphorylation is associated with an increase in SLC9A1/NHE1 Na(+)/H(+) exchange activity. Phosphorylation occurs in serum-dependent manner. The phosphorylation state may regulate the binding to SLC9A1/NHE1. In terms of processing, both N-myristoylation and calcium-mediated conformational changes are essential for its function in exocytic traffic. N-myristoylation is required for its association with microtubules and interaction with GAPDH, but not for the constitutive association to membranes. As to expression, ubiquitously expressed. Has been found in fetal eye, lung, liver, muscle, heart, kidney, thymus and spleen.

It is found in the nucleus. It localises to the cytoplasm. The protein localises to the cytoskeleton. Its subcellular location is the endomembrane system. The protein resides in the endoplasmic reticulum-Golgi intermediate compartment. It is found in the endoplasmic reticulum. It localises to the cell membrane. The protein localises to the membrane. Its function is as follows. Calcium-binding protein involved in different processes such as regulation of vesicular trafficking, plasma membrane Na(+)/H(+) exchanger and gene transcription. Involved in the constitutive exocytic membrane traffic. Mediates the association between microtubules and membrane-bound organelles of the endoplasmic reticulum and Golgi apparatus and is also required for the targeting and fusion of transcytotic vesicles (TCV) with the plasma membrane. Functions as an integral cofactor in cell pH regulation by controlling plasma membrane-type Na(+)/H(+) exchange activity. Affects the pH sensitivity of SLC9A1/NHE1 by increasing its sensitivity at acidic pH. Required for the stabilization and localization of SLC9A1/NHE1 at the plasma membrane. Inhibits serum- and GTPase-stimulated Na(+)/H(+) exchange. Plays a role as an inhibitor of ribosomal RNA transcription by repressing the nucleolar UBF1 transcriptional activity. May sequester UBF1 in the nucleoplasm and limit its translocation to the nucleolus. Associates to the ribosomal gene promoter. Acts as a negative regulator of the calcineurin/NFAT signaling pathway. Inhibits NFAT nuclear translocation and transcriptional activity by suppressing the calcium-dependent calcineurin phosphatase activity. Also negatively regulates the kinase activity of the apoptosis-induced kinase STK17B. Inhibits both STK17B auto- and substrate-phosphorylations in a calcium-dependent manner. This is Calcineurin B homologous protein 1 (CHP1) from Homo sapiens (Human).